The chain runs to 157 residues: dCTP deaminase (157 aa).

DCTP is bound by residues 79–84 (RSSLAR), D95, Q124, and Y138.

Belongs to the dCTP deaminase family. In terms of assembly, homotrimer.

The catalysed reaction is dCTP + H2O + H(+) = dUTP + NH4(+). It functions in the pathway pyrimidine metabolism; dUMP biosynthesis; dUMP from dCTP (dUTP route): step 1/2. Functionally, catalyzes the deamination of dCTP to dUTP. In Thermococcus gammatolerans (strain DSM 15229 / JCM 11827 / EJ3), this protein is dCTP deaminase.